Here is a 159-residue protein sequence, read N- to C-terminus: Protein Smg homolog (159 aa).

The protein belongs to the Smg family.

The chain is Protein Smg homolog from Dichelobacter nodosus (strain VCS1703A).